A 230-amino-acid polypeptide reads, in one-letter code: Demethylmenaquinone methyltransferase (230 aa).

S-adenosyl-L-methionine is bound by residues T62, D80, 100-101 (DA), and S117.

It belongs to the class I-like SAM-binding methyltransferase superfamily. MenG/UbiE family.

The catalysed reaction is a 2-demethylmenaquinol + S-adenosyl-L-methionine = a menaquinol + S-adenosyl-L-homocysteine + H(+). It functions in the pathway quinol/quinone metabolism; menaquinone biosynthesis; menaquinol from 1,4-dihydroxy-2-naphthoate: step 2/2. Methyltransferase required for the conversion of demethylmenaquinol (DMKH2) to menaquinol (MKH2). In Mycolicibacterium paratuberculosis (strain ATCC BAA-968 / K-10) (Mycobacterium paratuberculosis), this protein is Demethylmenaquinone methyltransferase.